We begin with the raw amino-acid sequence, 404 residues long: Glucose-1-phosphate adenylyltransferase (404 aa).

Residues Tyr-99, Gly-164, 179 to 180 (EK), and Ser-197 each bind alpha-D-glucose 1-phosphate.

It belongs to the bacterial/plant glucose-1-phosphate adenylyltransferase family. Homotetramer.

It catalyses the reaction alpha-D-glucose 1-phosphate + ATP + H(+) = ADP-alpha-D-glucose + diphosphate. Its pathway is glycan biosynthesis; glycogen biosynthesis. Involved in the biosynthesis of ADP-glucose, a building block required for the elongation reactions to produce glycogen. Catalyzes the reaction between ATP and alpha-D-glucose 1-phosphate (G1P) to produce pyrophosphate and ADP-Glc. The chain is Glucose-1-phosphate adenylyltransferase from Rhodococcus opacus (strain B4).